Consider the following 518-residue polypeptide: MANEGAGSLQQDASPGSSARPEPYPRPSPARYASTPSFESPQRHHRRNPIARRPVKETLNARSEYTLSQDDGTADDRINQYVIKQEIGRGSFGAVHVAVDQYGNEYAVKEFSKARLRKRAKSQLLRQSRGPKRSSRWPKLPFSSPGTGTWRRRDEKCSLFYQRRNCHYEEVTPQQSSILDRGTGRPDPRFSYMVMEMCKKGVVMKVTLEERADPYDDERCRCWFRDLILGIEYLHAQGIVHRDIKPDNCLITNDDVLKVVDFGVSEMFVLNSDMFTAKSAGSPAFLPPELCVVKHGDVSGKAADIWSMGVTLYCLRYGKLPFEEHSIIELYDAIKNRPIVCDGETDEVFKDLMLRILEKDPAKRIQMDELREHPWVTKNGMDPLLPKSENTAEIVDLPTEEEMFSAITKNFGHVLAVMKAAKKFKSLQGPTRASTPIQSILGQEYETHFVEPPTQMDPEESVSLPSPLPYKKTQSLNTYNRRAWERDDVVKGYHPQRRKLSLVLRQRAANRVLRTALF.

The segment at 1-72 (MANEGAGSLQ…SEYTLSQDDG (72 aa)) is disordered. Polar residues-rich tracts occupy residues 8 to 17 (SLQQDASPGS) and 60 to 71 (NARSEYTLSQDD). One can recognise a Protein kinase domain in the interval 81–376 (YVIKQEIGRG…MDELREHPWV (296 aa)). Residues 87 to 95 (IGRGSFGAV) and K109 contribute to the ATP site. Residues 119 to 149 (RAKSQLLRQSRGPKRSSRWPKLPFSSPGTGT) are disordered. D243 (proton acceptor) is an active-site residue. Positions 404 to 409 (FSAITK) are autoinhibitory domain. The interval 407 to 431 (ITKNFGHVLAVMKAAKKFKSLQGPT) is calmodulin-binding. The segment at 453–472 (PTQMDPEESVSLPSPLPYKK) is disordered.

The protein belongs to the protein kinase superfamily. Ser/Thr protein kinase family.

It carries out the reaction L-seryl-[protein] + ATP = O-phospho-L-seryl-[protein] + ADP + H(+). The catalysed reaction is L-threonyl-[protein] + ATP = O-phospho-L-threonyl-[protein] + ADP + H(+). Its activity is regulated as follows. Activated by Ca(2+)/calmodulin. Binding of calmodulin may relieve intrasteric autoinhibition. Calcium/calmodulin-dependent protein kinase that operates in the calcium-triggered CaMKK-CaMK1 signaling cascade. Phosphorylates and activates cmkB in vitro. Required in G1-phase of the cell cycle for proper timing of the initial nuclear division after germination as well as for subsequent nuclear division cycles. Required for the normal temporal regulation of nimX activity. This Emericella nidulans (Aspergillus nidulans) protein is Calcium/calmodulin-dependent protein kinase kinase cmkC.